Consider the following 80-residue polypeptide: Small ribosomal subunit protein bS16 (80 aa).

Belongs to the bacterial ribosomal protein bS16 family.

The sequence is that of Small ribosomal subunit protein bS16 from Nitrosococcus oceani (strain ATCC 19707 / BCRC 17464 / JCM 30415 / NCIMB 11848 / C-107).